A 526-amino-acid polypeptide reads, in one-letter code: Rho guanine nucleotide exchange factor 3 (526 aa).

Residues 20–40 (ELPPASGPAKDAEEPSNKRVK) form a disordered region. Phosphoserine occurs at positions 47 and 70. The DH domain maps to 122–304 (KRQEAIFELS…QGIVAEINTK (183 aa)). In terms of domain architecture, PH spans 291 to 449 (INIIQGIVAE…WLNCIRQAKE (159 aa)). The interval 464–526 (EGSFLNPTTG…GNSRHGESNV (63 aa)) is disordered. Positions 466–475 (SFLNPTTGSR) are enriched in polar residues.

Interacts with RHOA and RHOB.

The protein resides in the cytoplasm. Functionally, acts as a guanine nucleotide exchange factor (GEF) for RhoA and RhoB GTPases. This chain is Rho guanine nucleotide exchange factor 3 (ARHGEF3), found in Pongo abelii (Sumatran orangutan).